The primary structure comprises 565 residues: Putative lipase ATG15 (565 aa).

Over 1–21 (MISNDYTKFSSKRRSLRYSNR) the chain is Cytoplasmic. A helical; Signal-anchor for type II membrane protein membrane pass occupies residues 22–42 (ILLLMGTILLIVVYFYSDILV). The Lumenal segment spans residues 43-565 (DKSIIMFRNE…EYTTFTKRLI (523 aa)). N217 is a glycosylation site (N-linked (GlcNAc...) asparagine). S347 functions as the Charge relay system in the catalytic mechanism. The interval 488 to 538 (KKPKKQTTSSSSEKVDTSTTKSIDRTTITTRTNEKKWHPNPKDPSTTTTDD) is disordered. Residues 493–518 (QTTSSSSEKVDTSTTKSIDRTTITTR) show a composition bias toward low complexity. Residues 519 to 528 (TNEKKWHPNP) are compositionally biased toward basic and acidic residues.

This sequence belongs to the AB hydrolase superfamily. Lipase family. Binds to both phosphatidylinositol (PI) and phosphatidylinositol 3,5-bisphosphate (PIP2).

The protein localises to the endosome. It is found in the multivesicular body membrane. The protein resides in the prevacuolar compartment membrane. It carries out the reaction a triacylglycerol + H2O = a diacylglycerol + a fatty acid + H(+). Its function is as follows. Lipase which is essential for lysis of subvacuolar cytoplasm to vacuole targeted bodies and intravacuolar autophagic bodies. Involved in the lysis of intravacuolar multivesicular body (MVB) vesicles. The intravacuolar membrane disintegration by ATG15 is critical to life span extension. The chain is Putative lipase ATG15 (ATG15) from Vanderwaltozyma polyspora (strain ATCC 22028 / DSM 70294 / BCRC 21397 / CBS 2163 / NBRC 10782 / NRRL Y-8283 / UCD 57-17) (Kluyveromyces polysporus).